The chain runs to 121 residues: Large ribosomal subunit protein uL22 (121 aa).

This sequence belongs to the universal ribosomal protein uL22 family. In terms of assembly, part of the 50S ribosomal subunit.

Its function is as follows. This protein binds specifically to 23S rRNA; its binding is stimulated by other ribosomal proteins, e.g. L4, L17, and L20. It is important during the early stages of 50S assembly. It makes multiple contacts with different domains of the 23S rRNA in the assembled 50S subunit and ribosome. In terms of biological role, the globular domain of the protein is located near the polypeptide exit tunnel on the outside of the subunit, while an extended beta-hairpin is found that lines the wall of the exit tunnel in the center of the 70S ribosome. This is Large ribosomal subunit protein uL22 from Paenarthrobacter aurescens (strain TC1).